The primary structure comprises 720 residues: Polyribonucleotide nucleotidyltransferase (720 aa).

The Mg(2+) site is built by aspartate 487 and aspartate 493. Positions 554 to 613 constitute a KH domain; the sequence is PRIETFKIPTDKIREVIGTGGKVIREIVEKTGAKVNIEDDGTVKVASSDGEAMKAAIKWI. Residues 623–691 form the S1 motif domain; it reads GQIYDGTVVK…DRGKTRLSMK (69 aa). The interval 699–720 is disordered; sequence EDLEAKDKVAEGEKAPREAAGE. A compositionally biased stretch (basic and acidic residues) spans 701 to 720; sequence LEAKDKVAEGEKAPREAAGE.

Belongs to the polyribonucleotide nucleotidyltransferase family. Mg(2+) serves as cofactor.

The protein localises to the cytoplasm. The catalysed reaction is RNA(n+1) + phosphate = RNA(n) + a ribonucleoside 5'-diphosphate. Involved in mRNA degradation. Catalyzes the phosphorolysis of single-stranded polyribonucleotides processively in the 3'- to 5'-direction. This Bradyrhizobium diazoefficiens (strain JCM 10833 / BCRC 13528 / IAM 13628 / NBRC 14792 / USDA 110) protein is Polyribonucleotide nucleotidyltransferase.